The sequence spans 233 residues: Homeobox protein Hox-B6b (233 aa).

The Antp-type hexapeptide signature appears at 136–141 (IYPWMQ). The homeobox DNA-binding region spans 155 to 214 (GRRGRQTYTRYQTLELEKEFHFNRYLTRRRRIEISHALCLTERQIKIWFQNRRMKWKKEN). The tract at residues 213-233 (ENKLLNPSKTPEEEEEAEKKS) is disordered. Residues 224 to 233 (EEEEEAEKKS) are compositionally biased toward acidic residues.

Belongs to the Antp homeobox family.

The protein resides in the nucleus. Sequence-specific transcription factor which is part of a developmental regulatory system that provides cells with specific positional identities on the anterior-posterior axis. This chain is Homeobox protein Hox-B6b (hoxb6b), found in Takifugu rubripes (Japanese pufferfish).